The chain runs to 328 residues: Flap endonuclease 1 (328 aa).

An N-domain region spans residues 1-98; that stretch reads MGVKFKDITN…ETQEERINIK (98 aa). Residues D27, D80, E152, E154, D173, D175, and D227 each contribute to the Mg(2+) site. The interval 116-248 is I-domain; it reads AARKYAARTT…KGIKLIHKYG (133 aa). The tract at residues 320-328 is interaction with PCNA; it reads AQSSLEDWF.

The protein belongs to the XPG/RAD2 endonuclease family. FEN1 subfamily. Interacts with PCNA. PCNA stimulates the nuclease activity without altering cleavage specificity. Requires Mg(2+) as cofactor.

In terms of biological role, structure-specific nuclease with 5'-flap endonuclease and 5'-3' exonuclease activities involved in DNA replication and repair. During DNA replication, cleaves the 5'-overhanging flap structure that is generated by displacement synthesis when DNA polymerase encounters the 5'-end of a downstream Okazaki fragment. Binds the unpaired 3'-DNA end and kinks the DNA to facilitate 5' cleavage specificity. Cleaves one nucleotide into the double-stranded DNA from the junction in flap DNA, leaving a nick for ligation. Also involved in the base excision repair (BER) pathway. Acts as a genome stabilization factor that prevents flaps from equilibrating into structures that lead to duplications and deletions. Also possesses 5'-3' exonuclease activity on nicked or gapped double-stranded DNA. This chain is Flap endonuclease 1, found in Methanosphaera stadtmanae (strain ATCC 43021 / DSM 3091 / JCM 11832 / MCB-3).